The primary structure comprises 538 residues: Cytochrome P450 monooxygenase claM (538 aa).

Residues 36–56 form a helical membrane-spanning segment; the sequence is LSIGLVVLIGAISSFLLQQFL. N-linked (GlcNAc...) asparagine glycans are attached at residues Asn-306 and Asn-425. Cys-472 serves as a coordination point for heme.

Belongs to the cytochrome P450 family. Heme serves as cofactor.

It is found in the membrane. It catalyses the reaction 2 nataloe emodin + reduced [NADPH--hemoprotein reductase] + O2 = cladofulvin + oxidized [NADPH--hemoprotein reductase] + 2 H2O + H(+). Its pathway is pigment biosynthesis. Functionally, cytochrome P450 monooxygenase; part of the gene cluster that mediates the biosynthesis of the bianthraquinone cladofulvin, a conidial pigment not required for virulence but that plays a role in fitness and resistance to environmental stresses including UV light and low-temperature stress. The pathway begins with the synthesis of atrochrysone thioester by the polyketide synthase (PKS) claG. The atrochrysone carboxyl ACP thioesterase claF then breaks the thioester bond and releases the atrochrysone carboxylic acid from claG. This compound is decarboxylated by claH to yield emodin, which is further converted to chrysophanol hydroquinone by the reductase claC and the dehydratase claB. The cytochrome monooxygenase P450 claM then catalyzes the dimerization of nataloe-emodin to cladofulvin. This Passalora fulva (Tomato leaf mold) protein is Cytochrome P450 monooxygenase claM.